A 141-amino-acid chain; its full sequence is Hemoglobin subunit alpha-1 (141 aa).

Residues 1–141 (VLSAADKGNV…VSTVLTSKYR (141 aa)) form the Globin domain. His58 provides a ligand contact to O2. Residue His87 participates in heme b binding.

Belongs to the globin family. As to quaternary structure, heterotetramer of two alpha chains and two beta chains. Red blood cells.

Its function is as follows. Involved in oxygen transport from the lung to the various peripheral tissues. This chain is Hemoglobin subunit alpha-1, found in Bos mutus grunniens (Wild yak).